Here is an 886-residue protein sequence, read N- to C-terminus: Kinesin-like protein KIF18A (886 aa).

Residues 11–355 (RMKVVVRVRP…LKYANRAKEI (345 aa)) form the Kinesin motor domain. A Glycyl lysine isopeptide (Lys-Gly) (interchain with G-Cter in SUMO2) cross-link involves residue K24. 113-120 (GATGSGKT) contacts ATP. Residues 370-404 (ISQYVKICNMQKAEILMLKEKLKAYEEQKALSDRN) adopt a coiled-coil conformation. A Phosphoserine modification is found at S674. Residue K683 forms a Glycyl lysine isopeptide (Lys-Gly) (interchain with G-Cter in SUMO2) linkage. S695 is modified (phosphoserine). The segment at 774–804 (EQEPLASSKSSVHRIESSSFSTKDSMPESAG) is disordered. Residue K782 forms a Glycyl lysine isopeptide (Lys-Gly) (interchain with G-Cter in SUMO2) linkage. S826 carries the phosphoserine modification. Residue K862 forms a Glycyl lysine isopeptide (Lys-Gly) (interchain with G-Cter in SUMO2) linkage. Positions 862–886 (KRNTNKTNSNMLRKFRRNTSKENVQ) are disordered.

The protein belongs to the TRAFAC class myosin-kinesin ATPase superfamily. Kinesin family. As to quaternary structure, interacts with CENPE and ESR1. Post-translationally, glycosylated. Ubiquitinated.

The protein localises to the cell projection. It is found in the ruffle. The protein resides in the cytoplasm. Its subcellular location is the nucleus. It localises to the cytoskeleton. The protein localises to the microtubule organizing center. It is found in the centrosome. Its function is as follows. Microtubule-depolymerizing kinesin which plays a role in chromosome congression by reducing the amplitude of preanaphase oscillations and slowing poleward movement during anaphase, thus suppressing chromosome movements. May stabilize the CENPE-BUB1B complex at the kinetochores during early mitosis and maintains CENPE levels at kinetochores during chromosome congression. This chain is Kinesin-like protein KIF18A (Kif18a), found in Mus musculus (Mouse).